Reading from the N-terminus, the 326-residue chain is Putative HTH-type transcriptional regulatory protein MmarC7_1702 (326 aa).

Residues 128-183 form the HTH cro/C1-type domain; it reads LRETREKLKISVGELAEISRVSRKTIYKYEQNEANPSAEVAIKIEEYLDVPLIKGI. The segment at residues 139–158 is a DNA-binding region (H-T-H motif); it reads VGELAEISRVSRKTIYKYEQ.

This is Putative HTH-type transcriptional regulatory protein MmarC7_1702 from Methanococcus maripaludis (strain C7 / ATCC BAA-1331).